We begin with the raw amino-acid sequence, 441 residues long: MITRFAPSPTGYMHIGNARTALICWLYARSRSGKLLLRIDDTDLERSENRYVEGIKNDLTWLAMDWDICFNQRSRISRYDEVFNSLMDAGAVYPCYETPEELELKRKMMLKMGLPPIYDRSALNMTEQDQKAYSGRKPYFRLKIGRDQAISWEDEIRGKVVFQAKNISDPILRRTDGSYTYMFPSTVDDIDFEVTHIVRGEDHVSNTAVQIYIMGLLGAKIPSFAHLPLLRMGGSKMSKRVGGTEIFKMRDMNLEPMAINSYMARIGTSLPVEPHTNMRSLVDSFDIKLFNQAPIKFELEDISKLNVRLLQKLPFAEVQDRLEACGIKCSEGFWYAVRDNINVISEVKGWAEICGPGVTPVVDDVNRQLLQLASDLLPEGEPNDGTWKTWLQKIKECSGCETRDILLPLRLALTGVPKGPEFAKLLPLIGRVEILRRLRGA.

The 'HIGH' region signature appears at 7–17; it reads PSPTGYMHIGN. The short motif at 236-240 is the 'KMSKS' region element; sequence KMSKR. Lysine 239 lines the ATP pocket.

The protein belongs to the class-I aminoacyl-tRNA synthetase family. Glutamate--tRNA ligase type 1 subfamily. As to quaternary structure, monomer.

It localises to the cytoplasm. It catalyses the reaction tRNA(Glu) + L-glutamate + ATP = L-glutamyl-tRNA(Glu) + AMP + diphosphate. In terms of biological role, catalyzes the attachment of glutamate to tRNA(Glu) in a two-step reaction: glutamate is first activated by ATP to form Glu-AMP and then transferred to the acceptor end of tRNA(Glu). The sequence is that of Glutamate--tRNA ligase 1 from Anaplasma marginale (strain St. Maries).